Reading from the N-terminus, the 673-residue chain is MATSQRKILVTSALPYANGPIHLGHMLEYIQTDIWARFQKLRGHECHYICADDAHGTPIMLKAQQLSMAPEEMIAQVQKEHQQDFADFNIQFDNFHSTHSDENRELASEIYLKLRDGGYIKSKTISQLFDPEKSMFLPDRFVKGTCPKCKSVDQYGDNCDSCGATYSPTDLIDPKSAVSGATPVMKETEHFFFDLPAFEDMLKEWTRSGSLQQEMANKLGEWFEQGLQQWDITRDAPYFGFEIPDAPGKFFYVWLDAPIGYMGSFKNLCNKRSDLNFDEFWAKDSTAEVYHFIGKDIVYFHSLFWPAMLEGAGFRKPNSVYAHGYVTVNGAKMSKSKGTFIKARTYLDNLNPEYLRYYYAAKLSSRIDDLDLNLEDFAQRVNSDLVGKLVNLASRTAGFISKRFDGKLAKVADASLTETFLAKADAIAEFYETREFGKAMREIMALADIANAFVADAAPWQLVKEEDKQEEAHQVCSNALNLFRILVTYLKPVLPKLAQDVEAFLQLELTWDDLAKDLSGHEIAPFKALMQRVEMKNIEAIIEASTENLQVAEAPKSQLDLDPISEEISFDDFAKLDLRIARIAKAEHVPDANKLLKLQLDLGGETKQVFAGIKSAYAPEDLEGKLTVMVANLAPRKMRFGMSEGMVLAAGPGKKDLWILEPHEGAQPGMRVK.

The 'HIGH' region motif lies at 15-25 (PYANGPIHLGH). Positions 146, 149, 159, and 162 each coordinate Zn(2+). Residues 332 to 336 (KMSKS) carry the 'KMSKS' region motif. Lysine 335 serves as a coordination point for ATP. Positions 572–673 (DFAKLDLRIA…EGAQPGMRVK (102 aa)) constitute a tRNA-binding domain.

This sequence belongs to the class-I aminoacyl-tRNA synthetase family. MetG type 1 subfamily. As to quaternary structure, homodimer. It depends on Zn(2+) as a cofactor.

It localises to the cytoplasm. It carries out the reaction tRNA(Met) + L-methionine + ATP = L-methionyl-tRNA(Met) + AMP + diphosphate. Functionally, is required not only for elongation of protein synthesis but also for the initiation of all mRNA translation through initiator tRNA(fMet) aminoacylation. The polypeptide is Methionine--tRNA ligase (Shewanella loihica (strain ATCC BAA-1088 / PV-4)).